The sequence spans 302 residues: Beta-casein (302 aa).

Positions 1 to 15 are cleaved as a signal peptide; it reads MKLLILTCLVALGFA. 2 positions are modified to phosphoserine: serine 23 and serine 25. 16 tandem repeats follow at residues 144 to 151, 152 to 159, 160 to 167, 168 to 175, 176 to 182, 183 to 190, 191 to 198, 199 to 204, 205 to 214, 215 to 222, 223 to 230, 231 to 238, 241 to 247, 248 to 255, 256 to 262, and 263 to 269. The tract at residues 144-269 is 16 X approximate tandem repeats; it reads KREMLPIYER…LLPEEILPVN (126 aa).

It belongs to the beta-casein family. As to expression, mammary gland specific. Secreted in milk.

The protein resides in the secreted. In terms of biological role, important role in determination of the surface properties of the casein micelles. The polypeptide is Beta-casein (CSN2) (Notamacropus eugenii (Tammar wallaby)).